The chain runs to 177 residues: Probetacellulin (177 aa).

Positions 1–31 (MDPTAPGSSVSSLPLLLVLALGLAILHCVVA) are cleaved as a signal peptide. Residues 32 to 118 (DGNTTRTPET…LFYLQQDRGQ (87 aa)) lie on the Extracellular side of the membrane. 3 N-linked (GlcNAc...) asparagine glycosylation sites follow: N34, N42, and N52. In terms of domain architecture, EGF-like spans 65 to 105 (HFSRCPKQYKHYCIHGRCRFVVDEQTPSCICEKGYFGARCE). Disulfide bonds link C69/C82, C77/C93, and C95/C104. Residues 112-177 (LQQDRGQILV…SEDIQETNIA (66 aa)) constitute a propeptide, removed in mature form. The chain crosses the membrane as a helical span at residues 119-139 (ILVVCLIVVMVVFIILVIGVC). Residues 140 to 177 (TCCHPLRKHRKKKKEEKMETLDKDKTPISEDIQETNIA) are Cytoplasmic-facing. The interval 153–177 (KEEKMETLDKDKTPISEDIQETNIA) is disordered. The span at 154–167 (EEKMETLDKDKTPI) shows a compositional bias: basic and acidic residues.

In terms of assembly, monomer. Interacts with EGFR and ERBB4. As to expression, found in several mouse tissues including kidney, uterus and liver, as well as in beta tumor cell line and MCF-7 cells. It is not detected in the brain.

The protein resides in the secreted. The protein localises to the extracellular space. It is found in the cell membrane. Functionally, growth factor that binds to EGFR, ERBB4 and other EGF receptor family members. Potent mitogen for retinal pigment epithelial cells and vascular smooth muscle cells. In Mus musculus (Mouse), this protein is Probetacellulin (Btc).